A 121-amino-acid polypeptide reads, in one-letter code: MSRARSGKVNKNRHKKILKLAKGYRGRAKNCFRIAIQKVEKALQYSYRDRRNRKRQFRALWIQRINAAVRQYDMTYSQFINGLKQANITVDRKVMANLAVHNADSFVHLVELTKKSLAKTA.

It belongs to the bacterial ribosomal protein bL20 family.

Binds directly to 23S ribosomal RNA and is necessary for the in vitro assembly process of the 50S ribosomal subunit. It is not involved in the protein synthesizing functions of that subunit. The sequence is that of Large ribosomal subunit protein bL20 from Orientia tsutsugamushi (strain Boryong) (Rickettsia tsutsugamushi).